Reading from the N-terminus, the 441-residue chain is 23S rRNA (uracil(1939)-C(5))-methyltransferase RlmD (441 aa).

The 59-residue stretch at Lys-10–Lys-68 folds into the TRAM domain. [4Fe-4S] cluster is bound by residues Cys-81, Cys-87, Cys-90, and Cys-169. Residues Gln-274, Phe-303, Asn-308, Glu-324, Asp-351, and Asp-372 each contribute to the S-adenosyl-L-methionine site. The Nucleophile role is filled by Cys-398.

The protein belongs to the class I-like SAM-binding methyltransferase superfamily. RNA M5U methyltransferase family. RlmD subfamily.

The catalysed reaction is uridine(1939) in 23S rRNA + S-adenosyl-L-methionine = 5-methyluridine(1939) in 23S rRNA + S-adenosyl-L-homocysteine + H(+). Its function is as follows. Catalyzes the formation of 5-methyl-uridine at position 1939 (m5U1939) in 23S rRNA. This Pseudoalteromonas translucida (strain TAC 125) protein is 23S rRNA (uracil(1939)-C(5))-methyltransferase RlmD.